The following is a 175-amino-acid chain: Large ribosomal subunit protein uL10 (175 aa).

The protein belongs to the universal ribosomal protein uL10 family. As to quaternary structure, part of the ribosomal stalk of the 50S ribosomal subunit. The N-terminus interacts with L11 and the large rRNA to form the base of the stalk. The C-terminus forms an elongated spine to which L12 dimers bind in a sequential fashion forming a multimeric L10(L12)X complex.

In terms of biological role, forms part of the ribosomal stalk, playing a central role in the interaction of the ribosome with GTP-bound translation factors. In Halorhodospira halophila (strain DSM 244 / SL1) (Ectothiorhodospira halophila (strain DSM 244 / SL1)), this protein is Large ribosomal subunit protein uL10.